A 298-amino-acid chain; its full sequence is Probable 2-(5''-triphosphoribosyl)-3'-dephosphocoenzyme-A synthase 2 (298 aa).

It belongs to the CitG/MdcB family.

It catalyses the reaction 3'-dephospho-CoA + ATP = 2'-(5''-triphospho-alpha-D-ribosyl)-3'-dephospho-CoA + adenine. The protein is Probable 2-(5''-triphosphoribosyl)-3'-dephosphocoenzyme-A synthase 2 of Salmonella choleraesuis (strain SC-B67).